A 333-amino-acid polypeptide reads, in one-letter code: Dehydrodolichyl diphosphate synthase complex subunit Dhdds (333 aa).

D34, G35, R37, R38, and R85 together coordinate (2E,6E)-farnesyl diphosphate. A Mg(2+)-binding site is contributed by D34. Isopentenyl diphosphate contacts are provided by R38, R85, R205, R211, and S213.

Belongs to the UPP synthase family. The active dehydrodolichyl diphosphate synthase complex is a heterotetramer composed of a dimer of heterodimer of DHDDS and NUS1. Interacts with NPC2. Mg(2+) is required as a cofactor.

Its subcellular location is the endoplasmic reticulum membrane. The catalysed reaction is n isopentenyl diphosphate + (2E,6E)-farnesyl diphosphate = a di-trans,poly-cis-polyprenyl diphosphate + n diphosphate. Its pathway is protein modification; protein glycosylation. The protein operates within lipid metabolism. In terms of biological role, with NUS1, forms the dehydrodolichyl diphosphate synthase (DDS) complex, an essential component of the dolichol monophosphate (Dol-P) biosynthetic machinery. Both subunits contribute to enzymatic activity, i.e. condensation of multiple copies of isopentenyl pyrophosphate (IPP) to farnesyl pyrophosphate (FPP) to produce dehydrodolichyl diphosphate (Dedol-PP), a precursor of dolichol phosphate which is utilized as a sugar carrier in protein glycosylation in the endoplasmic reticulum (ER). Synthesizes long-chain polyprenols, mostly of C95 and C100 chain length. Regulates the glycosylation and stability of nascent NPC2, thereby promoting trafficking of LDL-derived cholesterol. The chain is Dehydrodolichyl diphosphate synthase complex subunit Dhdds from Mus musculus (Mouse).